The following is a 314-amino-acid chain: Protein OPG185 (314 aa).

The N-terminal stretch at 1-16 (MTRLPILLLLISLVYA) is a signal peptide. The Ig-like V-type domain maps to 17–121 (TPFPQTSKKI…NDTDKVDYEE (105 aa)). Residues 17 to 278 (TPFPQTSKKI…SNYKTKDFVE (262 aa)) are Virion surface-facing. A disulfide bond links C34 and C103. N37, N69, N112, and N161 each carry an N-linked (GlcNAc...) asparagine; by host glycan. The span at 193–202 (NTVSASSGES) shows a compositional bias: polar residues. A disordered region spans residues 193–214 (NTVSASSGESTTDETPEPITDK). The N-linked (GlcNAc...) asparagine; by host glycan is linked to N253. Residues 279-302 (IFGITALIILSAVAIFCITYYIYN) traverse the membrane as a helical segment. Over 303 to 314 (KRSRKYKTENKV) the chain is Intravirion.

The protein belongs to the orthopoxvirus OPG185 family. As to quaternary structure, heterodimerizes with OPG040. The heterodimer OPG185-OPG040 interacts with components of the entry fusion complex OPG143 and OPG094. Heterodimer with C3/VPC protein; disulfide-linked. Post-translationally, glycosylated; contains phosphate and sulfate-substituted glycans. O-glycosylation is required for hemagglutination and hemadsorption activities of infected cell membranes.

It is found in the virion membrane. Its subcellular location is the host membrane. Functionally, prevents cell to cell fusion by interacting with and directing the viral OPG040 protein on the host plasma membrane. The OPG185-OPG040 complex associates with components of the entry fusion complex (EFC) presumably to avoid superinfection and syncytium formation. Via its interaction with C3/VCP protein, protects the infected cell and probably also the extracellular enveloped virus from complement attack. The polypeptide is Protein OPG185 (OPG185) (Bos taurus (Bovine)).